The following is a 270-amino-acid chain: Putative phosphoenolpyruvate synthase regulatory protein (270 aa).

150 to 157 (GVSRCGKT) lines the ADP pocket.

This sequence belongs to the pyruvate, phosphate/water dikinase regulatory protein family. PSRP subfamily.

The catalysed reaction is [pyruvate, water dikinase] + ADP = [pyruvate, water dikinase]-phosphate + AMP + H(+). It carries out the reaction [pyruvate, water dikinase]-phosphate + phosphate + H(+) = [pyruvate, water dikinase] + diphosphate. Its function is as follows. Bifunctional serine/threonine kinase and phosphorylase involved in the regulation of the phosphoenolpyruvate synthase (PEPS) by catalyzing its phosphorylation/dephosphorylation. The chain is Putative phosphoenolpyruvate synthase regulatory protein from Aeromonas hydrophila subsp. hydrophila (strain ATCC 7966 / DSM 30187 / BCRC 13018 / CCUG 14551 / JCM 1027 / KCTC 2358 / NCIMB 9240 / NCTC 8049).